We begin with the raw amino-acid sequence, 119 residues long: Large ribosomal subunit protein uL18 (119 aa).

This sequence belongs to the universal ribosomal protein uL18 family. Part of the 50S ribosomal subunit; part of the 5S rRNA/L5/L18/L25 subcomplex. Contacts the 5S and 23S rRNAs.

In terms of biological role, this is one of the proteins that bind and probably mediate the attachment of the 5S RNA into the large ribosomal subunit, where it forms part of the central protuberance. The chain is Large ribosomal subunit protein uL18 from Borrelia duttonii (strain Ly).